A 432-amino-acid chain; its full sequence is Protein prenyltransferase alpha subunit repeat-containing protein 1-A (432 aa).

PFTA repeat units follow at residues 86-119 (ELID…TLNP), 121-154 (KDLQ…VQEL), 179-212 (EEMH…GNLK), 218-251 (DELS…LSKT), 294-327 (EEMD…HQLL), and 395-432 (SFDS…LQGH).

Belongs to the protein prenyltransferase subunit alpha family.

This chain is Protein prenyltransferase alpha subunit repeat-containing protein 1-A (ptar1-a), found in Xenopus laevis (African clawed frog).